Here is a 310-residue protein sequence, read N- to C-terminus: p-hydroxybenzoic acid efflux pump subunit AaeA (310 aa).

A helical transmembrane segment spans residues 12 to 32 (AITVVLVILAFIAIFNAWVYY).

Belongs to the membrane fusion protein (MFP) (TC 8.A.1) family.

It is found in the cell inner membrane. Forms an efflux pump with AaeB. This chain is p-hydroxybenzoic acid efflux pump subunit AaeA, found in Escherichia coli O139:H28 (strain E24377A / ETEC).